Reading from the N-terminus, the 165-residue chain is Small ribosomal subunit protein uS5 (165 aa).

The 64-residue stretch at L13–I76 folds into the S5 DRBM domain.

The protein belongs to the universal ribosomal protein uS5 family. In terms of assembly, part of the 30S ribosomal subunit. Contacts proteins S4 and S8.

With S4 and S12 plays an important role in translational accuracy. Its function is as follows. Located at the back of the 30S subunit body where it stabilizes the conformation of the head with respect to the body. The sequence is that of Small ribosomal subunit protein uS5 from Chlamydia muridarum (strain MoPn / Nigg).